The sequence spans 492 residues: Probable malate:quinone oxidoreductase (492 aa).

This sequence belongs to the MQO family. The cofactor is FAD.

The catalysed reaction is (S)-malate + a quinone = a quinol + oxaloacetate. It participates in carbohydrate metabolism; tricarboxylic acid cycle; oxaloacetate from (S)-malate (quinone route): step 1/1. This chain is Probable malate:quinone oxidoreductase, found in Methylobacillus flagellatus (strain ATCC 51484 / DSM 6875 / VKM B-1610 / KT).